A 409-amino-acid chain; its full sequence is Putative kinase Y4dM (409 aa).

D293 acts as the Proton acceptor in catalysis.

Belongs to the HipA Ser/Thr kinase family.

This Sinorhizobium fredii (strain NBRC 101917 / NGR234) protein is Putative kinase Y4dM.